We begin with the raw amino-acid sequence, 561 residues long: uncharacterized protein (561 aa).

Disordered stretches follow at residues 369-390 (SVPENGKPNMGRIPSAPSLSKG) and 429-515 (EGLG…GESE). Residue serine 383 is modified to Phosphoserine. Positions 465–503 (NISPESSRFGTPSDPNSSSQSLGNEVLSRPNSNSNSAES) are enriched in polar residues.

This is an uncharacterized protein from Schizosaccharomyces pombe (strain 972 / ATCC 24843) (Fission yeast).